A 360-amino-acid polypeptide reads, in one-letter code: Phospho-N-acetylmuramoyl-pentapeptide-transferase (360 aa).

Helical transmembrane passes span 21 to 41 (YVTFRAILGLLTAMVFSLWWG), 74 to 94 (MGGLLILAGVFISVLLWGDLG), 97 to 117 (YVWVMLFVLGAFGLIGFIDDY), 134 to 154 (YILQSLAALAIAFYLYASAGS), 168 to 188 (VMPQLGAFFILLAYFTIVGSS), 199 to 219 (GLAIMPTVMVAAAFALIAYLS), 236 to 256 (SGELVIVCTAIVGAGLGFLWF), 263 to 283 (VFMGDVGSLSLGAALGTIAVL), 288 to 308 (ILLVIMGGVFVMETVSVILQV), and 338 to 358 (VIVRFWIISLFLVLLGLATLK).

The protein belongs to the glycosyltransferase 4 family. MraY subfamily. The cofactor is Mg(2+).

The protein resides in the cell inner membrane. The catalysed reaction is UDP-N-acetyl-alpha-D-muramoyl-L-alanyl-gamma-D-glutamyl-meso-2,6-diaminopimeloyl-D-alanyl-D-alanine + di-trans,octa-cis-undecaprenyl phosphate = di-trans,octa-cis-undecaprenyl diphospho-N-acetyl-alpha-D-muramoyl-L-alanyl-D-glutamyl-meso-2,6-diaminopimeloyl-D-alanyl-D-alanine + UMP. It participates in cell wall biogenesis; peptidoglycan biosynthesis. Functionally, catalyzes the initial step of the lipid cycle reactions in the biosynthesis of the cell wall peptidoglycan: transfers peptidoglycan precursor phospho-MurNAc-pentapeptide from UDP-MurNAc-pentapeptide onto the lipid carrier undecaprenyl phosphate, yielding undecaprenyl-pyrophosphoryl-MurNAc-pentapeptide, known as lipid I. In Shewanella loihica (strain ATCC BAA-1088 / PV-4), this protein is Phospho-N-acetylmuramoyl-pentapeptide-transferase.